Reading from the N-terminus, the 130-residue chain is uncharacterized protein (130 aa).

The protein belongs to the thioester dehydratase family. FabZ subfamily.

This is an uncharacterized protein from Bacillus subtilis (strain 168).